A 318-amino-acid chain; its full sequence is Methionine import ATP-binding protein MetN (318 aa).

The region spanning 2 to 237 (IEIKDVGKIF…PEGELKKIIE (236 aa)) is the ABC transporter domain. 34-41 (GRSGAGKS) is an ATP binding site.

It belongs to the ABC transporter superfamily. Methionine importer (TC 3.A.1.24) family. The complex is composed of two ATP-binding proteins (MetN), two transmembrane proteins (MetI) and a solute-binding protein (MetQ).

The protein resides in the cell membrane. It carries out the reaction L-methionine(out) + ATP + H2O = L-methionine(in) + ADP + phosphate + H(+). The enzyme catalyses D-methionine(out) + ATP + H2O = D-methionine(in) + ADP + phosphate + H(+). Part of the ABC transporter complex MetNIQ involved in methionine import. Responsible for energy coupling to the transport system. The sequence is that of Methionine import ATP-binding protein MetN from Clostridium tetani (strain Massachusetts / E88).